The sequence spans 106 residues: YcgL domain-containing protein HCH_02617 (106 aa).

Residues 6 to 90 enclose the YcgL domain; it reads RLISIFRSSK…VQDDYMMDVV (85 aa).

This chain is YcgL domain-containing protein HCH_02617, found in Hahella chejuensis (strain KCTC 2396).